The primary structure comprises 715 residues: Methionine--tRNA ligase (715 aa).

The 'HIGH' region motif lies at 20-30 (PYANGKAHIGH). The Zn(2+) site is built by C151, C154, C163, and C167. The short motif at 334 to 338 (KFSKT) is the 'KMSKS' region element. K337 contributes to the ATP binding site. Positions 559-593 (ANAKRNGVKGGEKEPSKSEGMGPSEASKASEKTVD) are disordered. A tRNA-binding domain is found at 613 to 715 (DFAKLDIRVG…KEIKSGSRIR (103 aa)).

This sequence belongs to the class-I aminoacyl-tRNA synthetase family. MetG type 1 subfamily. In terms of assembly, homodimer. Zn(2+) is required as a cofactor.

It is found in the cytoplasm. The catalysed reaction is tRNA(Met) + L-methionine + ATP = L-methionyl-tRNA(Met) + AMP + diphosphate. Functionally, is required not only for elongation of protein synthesis but also for the initiation of all mRNA translation through initiator tRNA(fMet) aminoacylation. The polypeptide is Methionine--tRNA ligase (Methanosarcina mazei (strain ATCC BAA-159 / DSM 3647 / Goe1 / Go1 / JCM 11833 / OCM 88) (Methanosarcina frisia)).